Reading from the N-terminus, the 527-residue chain is Tubulin-specific chaperone E (527 aa).

Ser-2 bears the N-acetylserine mark. In terms of domain architecture, CAP-Gly spans 27–71 (GVVPPVAGPWLGVEWDNPERGKHDGSHEGTVYFQCRHPTGGSFIR). 7 LRR repeats span residues 154-175 (NIRKVDLSKNLLSSWDEVIHIA), 180-200 (HLEVLNVSENKLKFPSGSVLT), 205-226 (ALKVLVLNQTGITWAEVLRCAM), 230-252 (GLEELYLESNNIFISERPTDVLQ), 253-274 (TVKLLDLSSNQLIDENQLYLIA), 278-299 (RLEQLILSDIGISSLHFPDAGI), and 308-329 (SLKYLVVNDNQISQWSFFNELD). An LRRCT domain is found at 342-384 (NPLTKEDKEAETARLLIIASIGQLKTLNKCEILPEERRRAELD). An N6-acetyllysine modification is found at Lys-463. Residue Ser-495 is modified to Phosphoserine.

This sequence belongs to the TBCE family. Supercomplex made of cofactors A to E. Cofactors A and D function by capturing and stabilizing tubulin in a quasi-native conformation. Cofactor E binds to the cofactor D-tubulin complex; interaction with cofactor C then causes the release of tubulin polypeptides that are committed to the native state. Cofactors B and E can form a heterodimer which binds to alpha-tubulin and enhances their ability to dissociate tubulin heterodimers. Interacts with TBCD.

The protein resides in the cytoplasm. It localises to the cytoskeleton. Tubulin-folding protein; involved in the second step of the tubulin folding pathway and in the regulation of tubulin heterodimer dissociation. Required for correct organization of microtubule cytoskeleton and mitotic splindle, and maintenance of the neuronal microtubule network. The sequence is that of Tubulin-specific chaperone E (TBCE) from Pongo abelii (Sumatran orangutan).